Reading from the N-terminus, the 475-residue chain is Aspartyl/glutamyl-tRNA(Asn/Gln) amidotransferase subunit B (475 aa).

Belongs to the GatB/GatE family. GatB subfamily. In terms of assembly, heterotrimer of A, B and C subunits.

The catalysed reaction is L-glutamyl-tRNA(Gln) + L-glutamine + ATP + H2O = L-glutaminyl-tRNA(Gln) + L-glutamate + ADP + phosphate + H(+). The enzyme catalyses L-aspartyl-tRNA(Asn) + L-glutamine + ATP + H2O = L-asparaginyl-tRNA(Asn) + L-glutamate + ADP + phosphate + 2 H(+). Allows the formation of correctly charged Asn-tRNA(Asn) or Gln-tRNA(Gln) through the transamidation of misacylated Asp-tRNA(Asn) or Glu-tRNA(Gln) in organisms which lack either or both of asparaginyl-tRNA or glutaminyl-tRNA synthetases. The reaction takes place in the presence of glutamine and ATP through an activated phospho-Asp-tRNA(Asn) or phospho-Glu-tRNA(Gln). The chain is Aspartyl/glutamyl-tRNA(Asn/Gln) amidotransferase subunit B from Staphylococcus aureus (strain MRSA252).